The following is a 936-amino-acid chain: General transcription factor II-I repeat domain-containing protein 2 (936 aa).

A GTF2I-like 1 repeat occupies 95-189; that stretch reads EACPGEAQLL…FLGAESQLGG (95 aa). Positions 199-222 are disordered; the sequence is PTVPPNDSYGPVSVKTEPMEDSGT. One copy of the GTF2I-like 2 repeat lies at 319–413; sequence LSGLEKIKQL…LPGLELSNVG (95 aa).

Belongs to the TFII-I family. In terms of tissue distribution, ubiquitous.

The protein resides in the nucleus. The sequence is that of General transcription factor II-I repeat domain-containing protein 2 (Gtf2ird2) from Mus musculus (Mouse).